The primary structure comprises 123 residues: Small ribosomal subunit protein uS12 (123 aa).

Residues methionine 1–proline 22 form a disordered region. Aspartate 89 carries the 3-methylthioaspartic acid modification. Residues glycine 100–lysine 123 are disordered. A compositionally biased stretch (basic residues) spans asparagine 111 to lysine 123.

This sequence belongs to the universal ribosomal protein uS12 family. In terms of assembly, part of the 30S ribosomal subunit. Contacts proteins S8 and S17. May interact with IF1 in the 30S initiation complex.

Its function is as follows. With S4 and S5 plays an important role in translational accuracy. Interacts with and stabilizes bases of the 16S rRNA that are involved in tRNA selection in the A site and with the mRNA backbone. Located at the interface of the 30S and 50S subunits, it traverses the body of the 30S subunit contacting proteins on the other side and probably holding the rRNA structure together. The combined cluster of proteins S8, S12 and S17 appears to hold together the shoulder and platform of the 30S subunit. The sequence is that of Small ribosomal subunit protein uS12 from Pseudomonas putida (strain GB-1).